We begin with the raw amino-acid sequence, 341 residues long: Zinc transporter ZIP11 (341 aa).

The next 7 membrane-spanning stretches (helical) occupy residues 12–32, 44–64, 72–92, 193–213, 262–284, 289–306, and 321–341; these read LLGTFFTWGLTAAGAALVFVF, LGFAAGVMLAASYWSLLAPAV, GFGSLAFLPVAIGFTLGAAFV, IALLILAITIHNIPEGLAVGV, FWYGQLSGMVEPLAGVFGAFAVV, ILPYALAFAAGAMVYVIM, and LASWASILGFVVMMSLDVGLG.

This sequence belongs to the ZIP transporter (TC 2.A.5) family.

Its subcellular location is the cell membrane. The protein localises to the nucleus. It is found in the cytoplasm. It localises to the golgi apparatus. The enzyme catalyses Zn(2+)(in) = Zn(2+)(out). The catalysed reaction is Cu(2+)(in) = Cu(2+)(out). Its function is as follows. Zinc importer that regulates cytosolic zinc concentrations either via zinc influx from the extracellular compartment or efflux from intracellular organelles such as Golgi apparatus. May transport copper ions as well. The transport mechanism remains to be elucidated. The chain is Zinc transporter ZIP11 (SLC39A11) from Bos taurus (Bovine).